Here is a 69-residue protein sequence, read N- to C-terminus: Protein SlyX homolog (69 aa).

It belongs to the SlyX family.

In Pseudomonas paraeruginosa (strain DSM 24068 / PA7) (Pseudomonas aeruginosa (strain PA7)), this protein is Protein SlyX homolog.